The sequence spans 223 residues: SCMKAAPMKEVSIRGQGSLAYPGLRTQGNLETLSGPNDATRGLTSLADTFEHVIEELLDEQEVIQPSKENKDADLYSSRVMLSSQVPLEPPLLFLLEEYKNYLDAANMSMRVRRHSDPARRGELSVCDSISEWVTAAEKKTAVDMSGATVTVLEKVPVPKGQLKQYFYETKCSSKGYAKEGCRGIDKRYWNSQCRTTQSYVRALTMDNKKRVGWRFIRIDTSC.

The first 5 residues, Ser-1–Ala-5, serve as a signal peptide directing secretion. The propeptide occupies Ala-6–Arg-114. A glycan (N-linked (GlcNAc...) asparagine) is linked at Asn-107. 2 disulfides stabilise this stretch: Cys-127-Cys-194 and Cys-172-Cys-223.

Belongs to the NGF-beta family.

It localises to the secreted. In terms of biological role, promotes the survival of neuronal populations that are all located either in the central nervous system or directly connected to it. This Exiliboa placata (Oaxacan dwarf boa) protein is Neurotrophic factor BDNF precursor form (BDNF).